We begin with the raw amino-acid sequence, 736 residues long: Phosphoribosylformylglycinamidine synthase subunit PurL (736 aa).

H48 is an active-site residue. Y51 and K90 together coordinate ATP. Mg(2+) is bound at residue E92. Residues 93–96 (SHNH) and R115 each bind substrate. The active-site Proton acceptor is the H94. D116 contacts Mg(2+). Q239 provides a ligand contact to substrate. D267 provides a ligand contact to Mg(2+). 311–313 (ESQ) is a binding site for substrate. ATP-binding residues include D492 and G529. Residue N530 participates in Mg(2+) binding. S532 contributes to the substrate binding site.

The protein belongs to the FGAMS family. As to quaternary structure, monomer. Part of the FGAM synthase complex composed of 1 PurL, 1 PurQ and 2 PurS subunits.

It is found in the cytoplasm. It carries out the reaction N(2)-formyl-N(1)-(5-phospho-beta-D-ribosyl)glycinamide + L-glutamine + ATP + H2O = 2-formamido-N(1)-(5-O-phospho-beta-D-ribosyl)acetamidine + L-glutamate + ADP + phosphate + H(+). The protein operates within purine metabolism; IMP biosynthesis via de novo pathway; 5-amino-1-(5-phospho-D-ribosyl)imidazole from N(2)-formyl-N(1)-(5-phospho-D-ribosyl)glycinamide: step 1/2. Part of the phosphoribosylformylglycinamidine synthase complex involved in the purines biosynthetic pathway. Catalyzes the ATP-dependent conversion of formylglycinamide ribonucleotide (FGAR) and glutamine to yield formylglycinamidine ribonucleotide (FGAM) and glutamate. The FGAM synthase complex is composed of three subunits. PurQ produces an ammonia molecule by converting glutamine to glutamate. PurL transfers the ammonia molecule to FGAR to form FGAM in an ATP-dependent manner. PurS interacts with PurQ and PurL and is thought to assist in the transfer of the ammonia molecule from PurQ to PurL. This chain is Phosphoribosylformylglycinamidine synthase subunit PurL, found in Beijerinckia indica subsp. indica (strain ATCC 9039 / DSM 1715 / NCIMB 8712).